An 856-amino-acid chain; its full sequence is Phospholipase D gamma 2 (856 aa).

The 141-residue stretch at 21–161 folds into the C2 domain; sequence PLATSSGSLM…CSGNRIEGLF (141 aa). D223 serves as a coordination point for Ca(2+). One can recognise a PLD phosphodiesterase 1 domain in the interval 362-397; the sequence is TIYTHHQKTMIVDAEAAQNRRKIVAFVGGLDLCNGR. Residues H367, K369, and D374 contribute to the active site. H367 is a binding site for a 1,2-diacyl-sn-glycero-3-phosphate. 2 residues coordinate Ca(2+): H403 and H435. Residues Q562 and H707 each contribute to the a 1,2-diacyl-sn-glycero-3-phosphate site. Positions 702–729 constitute a PLD phosphodiesterase 2 domain; it reads FMIYVHSKGMVVDDEFVLIGSANINQRS. Active-site residues include H707, K709, and D714. Residue E770 coordinates Ca(2+).

It belongs to the phospholipase D family. C2-PLD subfamily. It depends on Ca(2+) as a cofactor. In terms of tissue distribution, highly expressed in roots and flowers, moderately in stems, leaves and seedlings and low in siliques. Not detected in seeds.

The protein localises to the cytoplasm. It is found in the membrane. The catalysed reaction is a 1,2-diacyl-sn-glycero-3-phosphocholine + H2O = a 1,2-diacyl-sn-glycero-3-phosphate + choline + H(+). Inhibited by neomycin. Hydrolyzes glycerol-phospholipids at the terminal phosphodiesteric bond to generate phosphatidic acids (PA). Plays an important role in various cellular processes, including phytohormone action, vesicular trafficking, secretion, cytoskeletal arrangement, meiosis, tumor promotion, pathogenesis, membrane deterioration and senescence. Can use phosphatidylserine but prefers ethanolamine-containing lipids as substrates. Can use phosphatidylcholine (PC) as substrates in the presence of phosphatidylethanolamine (PE) and PIP2. Involved in membrane lipid modulation under aluminum (Al) stress and negatively modulate plant tolerance to Al. The protein is Phospholipase D gamma 2 of Arabidopsis thaliana (Mouse-ear cress).